Reading from the N-terminus, the 333-residue chain is tRNA(Ile)-lysidine synthase (333 aa).

33–38 (SGGADS) contacts ATP.

It belongs to the tRNA(Ile)-lysidine synthase family.

It localises to the cytoplasm. The catalysed reaction is cytidine(34) in tRNA(Ile2) + L-lysine + ATP = lysidine(34) in tRNA(Ile2) + AMP + diphosphate + H(+). Functionally, ligates lysine onto the cytidine present at position 34 of the AUA codon-specific tRNA(Ile) that contains the anticodon CAU, in an ATP-dependent manner. Cytidine is converted to lysidine, thus changing the amino acid specificity of the tRNA from methionine to isoleucine. This Salinispora tropica (strain ATCC BAA-916 / DSM 44818 / JCM 13857 / NBRC 105044 / CNB-440) protein is tRNA(Ile)-lysidine synthase.